Reading from the N-terminus, the 861-residue chain is Methyltransferase/ribosomally synthesized type III borosin cyclic peptide precursor aboMAa (861 aa).

Residues 1–279 (MSSPAVETKV…AISTFYLPPK (279 aa)) are methyltransferase domain. Residues arginine 100, tyrosine 104, and tyrosine 126 contribute to the active site. S-adenosyl-L-methionine contacts are provided by tyrosine 126, histidine 128, valine 131, alanine 158, glutamine 200, alanine 241, serine 272, and threonine 273. A clasp domain region spans residues 280–408 (ALSPLHEESA…GLVRSVMKTS (129 aa)). Residues 409-799 (PEDVAKQFVQ…PPDLEELPIP (391 aa)) are type III-specific C-terminal domain. Disordered regions lie at residues 575–596 (NGAF…SSQG) and 772–801 (EAAE…IPDA). The segment covering 579–593 (PSGGGGGSGGGGGSS) has biased composition (gly residues). The span at 772–783 (EAAEKDSAVDDE) shows a compositional bias: basic and acidic residues. Residues 784–797 (KFADEEPPDLEELP) show a composition bias toward acidic residues. Valine 805 and valine 807 each carry N-methylvaline. Tandem repeats lie at residues 805 to 809 (VDVTD), 810 to 814 (VDVTD), 815 to 819 (VDVTD), 820 to 824 (VDVTD), 825 to 829 (VDVTD), 830 to 834 (VDVTD), 835 to 839 (VDVTD), 840 to 844 (VDVTD), and 845 to 849 (VDVTD). Residues 805 to 854 (VDVTDVDVTDVDVTDVDVTDVDVTDVDVTDVDVTDVDVTDVDVTDVDVVD) are 10 X 5 AA tandem repeats of VDVTD. Threonine 808 is modified (N-methylthreonine). N-methylvaline is present on residues valine 810 and valine 812. Threonine 813 carries the N-methylthreonine modification. An N-methylvaline mark is found at valine 815 and valine 817. At threonine 818 the chain carries N-methylthreonine. An N-methylvaline mark is found at valine 820 and valine 822. An N-methylthreonine modification is found at threonine 823. N-methylvaline occurs at positions 825 and 827. Threonine 828 is subject to N-methylthreonine. An N-methylvaline mark is found at valine 830 and valine 832. Threonine 833 bears the N-methylthreonine mark. Residues 850–854 (VDVVD) form a 10; approximate repeat.

This sequence in the N-terminal section; belongs to the precorrin methyltransferase family. Post-translationally, aboMA automethylates at Val-805, Val-807, Thr-808, Val-810, Val-812, Thr-813, Val-815, Val-817, Thr-818, Val-820, Val-822, Thr-823, Val-825, Val-827 and Thr-828, Val-830, Val-832 and T-833 before being processed by a prolyloligopeptidase which likely forms a peptidyl ester upon removal of the follower propeptide, which then undergoes macrocyclization with the N-terminus of the modified core peptide. Peptide backbone alpha-N-methylations change the physicochemical properties of amide bonds to provide structural constraints and other favorable characteristics including biological membrane permeability to peptides.

Its pathway is secondary metabolite biosynthesis. Functionally, fusion protein of the methyltransferase aboM and a type III borosin core peptide; part of the gene cluster that mediates the biosynthesis of a type III borosin, a highly methylated cyclic peptide with potent biological activities. Type III borosins derive from the C-terminus of the fusion protein, and it is the same protein that methylates its own C-terminus using S-adenosyl methionine (SAM). The C-terminus is subsequently cleaved off and macrocyclized by a prolyloligopeptidase to give the final product. The sequence is that of Methyltransferase/ribosomally synthesized type III borosin cyclic peptide precursor aboMAa from Anomoporia bombycina (Polyporus bombycinus).